The chain runs to 560 residues: Dihydroxy-acid dehydratase (560 aa).

[2Fe-2S] cluster is bound at residue Cys-50. Asp-82 contacts Mg(2+). Cys-123 is a binding site for [2Fe-2S] cluster. Mg(2+) is bound by residues Asp-124 and Lys-125. Lys-125 carries the N6-carboxylysine modification. Cys-195 contributes to the [2Fe-2S] cluster binding site. Residue Glu-447 coordinates Mg(2+). Catalysis depends on Ser-473, which acts as the Proton acceptor.

This sequence belongs to the IlvD/Edd family. Homodimer. It depends on [2Fe-2S] cluster as a cofactor. Requires Mg(2+) as cofactor.

The enzyme catalyses (2R)-2,3-dihydroxy-3-methylbutanoate = 3-methyl-2-oxobutanoate + H2O. It carries out the reaction (2R,3R)-2,3-dihydroxy-3-methylpentanoate = (S)-3-methyl-2-oxopentanoate + H2O. It participates in amino-acid biosynthesis; L-isoleucine biosynthesis; L-isoleucine from 2-oxobutanoate: step 3/4. Its pathway is amino-acid biosynthesis; L-valine biosynthesis; L-valine from pyruvate: step 3/4. Its function is as follows. Functions in the biosynthesis of branched-chain amino acids. Catalyzes the dehydration of (2R,3R)-2,3-dihydroxy-3-methylpentanoate (2,3-dihydroxy-3-methylvalerate) into 2-oxo-3-methylpentanoate (2-oxo-3-methylvalerate) and of (2R)-2,3-dihydroxy-3-methylbutanoate (2,3-dihydroxyisovalerate) into 2-oxo-3-methylbutanoate (2-oxoisovalerate), the penultimate precursor to L-isoleucine and L-valine, respectively. This is Dihydroxy-acid dehydratase from Methylibium petroleiphilum (strain ATCC BAA-1232 / LMG 22953 / PM1).